The sequence spans 354 residues: Uroporphyrinogen decarboxylase (354 aa).

Residues Arg-27–Arg-31, Asp-77, Tyr-154, Ser-209, and His-327 contribute to the substrate site.

Belongs to the uroporphyrinogen decarboxylase family. Homodimer.

Its subcellular location is the cytoplasm. It carries out the reaction uroporphyrinogen III + 4 H(+) = coproporphyrinogen III + 4 CO2. Its pathway is porphyrin-containing compound metabolism; protoporphyrin-IX biosynthesis; coproporphyrinogen-III from 5-aminolevulinate: step 4/4. In terms of biological role, catalyzes the decarboxylation of four acetate groups of uroporphyrinogen-III to yield coproporphyrinogen-III. This Saccharophagus degradans (strain 2-40 / ATCC 43961 / DSM 17024) protein is Uroporphyrinogen decarboxylase.